We begin with the raw amino-acid sequence, 366 residues long: Chorismate synthase (366 aa).

Arginine 48 serves as a coordination point for NADP(+). Residues 125–127, 241–242, glycine 285, 300–304, and arginine 326 contribute to the FMN site; these read RSS, NA, and KPTSS.

It belongs to the chorismate synthase family. Homotetramer. Requires FMNH2 as cofactor.

It carries out the reaction 5-O-(1-carboxyvinyl)-3-phosphoshikimate = chorismate + phosphate. Its pathway is metabolic intermediate biosynthesis; chorismate biosynthesis; chorismate from D-erythrose 4-phosphate and phosphoenolpyruvate: step 7/7. Catalyzes the anti-1,4-elimination of the C-3 phosphate and the C-6 proR hydrogen from 5-enolpyruvylshikimate-3-phosphate (EPSP) to yield chorismate, which is the branch point compound that serves as the starting substrate for the three terminal pathways of aromatic amino acid biosynthesis. This reaction introduces a second double bond into the aromatic ring system. This Roseobacter denitrificans (strain ATCC 33942 / OCh 114) (Erythrobacter sp. (strain OCh 114)) protein is Chorismate synthase.